The following is a 622-amino-acid chain: DNA topoisomerase 3 (622 aa).

Positions 2–148 constitute a Toprim domain; the sequence is RVLCVAEKNS…SIQVIRADFN (147 aa). One can recognise a Topo IA-type catalytic domain in the interval 166–596; it reads SKNAADAVDA…MILTQFRDVF (431 aa). Tyr-330 acts as the O-(5'-phospho-DNA)-tyrosine intermediate in catalysis.

It belongs to the type IA topoisomerase family. In terms of assembly, interacts with hus2.

It carries out the reaction ATP-independent breakage of single-stranded DNA, followed by passage and rejoining.. Its function is as follows. Releases the supercoiling and torsional tension of DNA introduced during the DNA replication and transcription by transiently cleaving and rejoining one strand of the DNA duplex. Introduces a single-strand break via transesterification at a target site in duplex DNA. The scissile phosphodiester is attacked by the catalytic tyrosine of the enzyme, resulting in the formation of a DNA-(5'-phosphotyrosyl)-enzyme intermediate and the expulsion of a 3'-OH DNA strand. The free DNA strand than undergoes passage around the unbroken strand thus removing DNA supercoils. Finally, in the religation step, the DNA 3'-OH attacks the covalent intermediate to expel the active-site tyrosine and restore the DNA phosphodiester backbone. This chain is DNA topoisomerase 3 (top3), found in Schizosaccharomyces pombe (strain 972 / ATCC 24843) (Fission yeast).